A 284-amino-acid chain; its full sequence is 2-dehydro-3-deoxyphosphooctonate aldolase (284 aa).

This sequence belongs to the KdsA family.

It is found in the cytoplasm. It carries out the reaction D-arabinose 5-phosphate + phosphoenolpyruvate + H2O = 3-deoxy-alpha-D-manno-2-octulosonate-8-phosphate + phosphate. Its pathway is carbohydrate biosynthesis; 3-deoxy-D-manno-octulosonate biosynthesis; 3-deoxy-D-manno-octulosonate from D-ribulose 5-phosphate: step 2/3. It functions in the pathway bacterial outer membrane biogenesis; lipopolysaccharide biosynthesis. The sequence is that of 2-dehydro-3-deoxyphosphooctonate aldolase from Burkholderia mallei (strain NCTC 10247).